A 270-amino-acid chain; its full sequence is tRNA 2-(methylsulfanyl)-N(6)-isopentenyladenosine(37) hydroxylase (270 aa).

Glutamate 59, glutamate 137, histidine 140, glutamate 190, glutamate 219, and histidine 222 together coordinate Fe cation.

This sequence belongs to the MiaE family. As to quaternary structure, monomer. Requires Fe cation as cofactor.

It catalyses the reaction 2-methylsulfanyl-N(6)-dimethylallyladenosine(37) in tRNA + AH2 + O2 = N(6)-[(2E)-4-hydroxy-3-methylbut-2-en-1-yl]-2-(methylsulfanyl)adenosine(37) in tRNA + A + H2O. The protein operates within tRNA modification; 2-methylthio-N-6-(cis-hydroxy)isopentenyl adenosine-tRNA biosynthesis. In terms of biological role, involved in specific tRNA modification. Catalyzes the oxygen-dependent hydroxylation of 2-methylthio-N-6-isopentenyl adenosine (ms2i6A) to produce 2-methylthio-N-6-(cis-hydroxy)isopentenyl adenosine (ms2io6A) at position 37 in tRNAs. Can also use N6-(dimethylallyl)adenosine (i6A) as substrate, with lower efficiency. The presence of the hydroxyl group on the tRNA may regulate the ability of S.typhimurium to grow on the citric acid cycle (CAC) intermediates succinate, fumarate and malate. In Salmonella typhimurium (strain LT2 / SGSC1412 / ATCC 700720), this protein is tRNA 2-(methylsulfanyl)-N(6)-isopentenyladenosine(37) hydroxylase.